Reading from the N-terminus, the 648-residue chain is Biosynthetic arginine decarboxylase (648 aa).

K109 carries the post-translational modification N6-(pyridoxal phosphate)lysine. 291–301 contacts substrate; that stretch reads LDVGGGLGVDY.

This sequence belongs to the Orn/Lys/Arg decarboxylase class-II family. SpeA subfamily. The cofactor is Mg(2+). It depends on pyridoxal 5'-phosphate as a cofactor.

It catalyses the reaction L-arginine + H(+) = agmatine + CO2. Catalyzes the biosynthesis of agmatine from arginine. This is Biosynthetic arginine decarboxylase from Prochlorococcus marinus (strain SARG / CCMP1375 / SS120).